The chain runs to 366 residues: 2-aminoethylphosphonate--pyruvate transaminase (366 aa).

Lysine 192 is modified (N6-(pyridoxal phosphate)lysine).

This sequence belongs to the class-V pyridoxal-phosphate-dependent aminotransferase family. PhnW subfamily. In terms of assembly, homodimer. Pyridoxal 5'-phosphate serves as cofactor.

The enzyme catalyses (2-aminoethyl)phosphonate + pyruvate = phosphonoacetaldehyde + L-alanine. Functionally, involved in phosphonate degradation. This chain is 2-aminoethylphosphonate--pyruvate transaminase (phnW), found in Lysinibacillus sphaericus (strain C3-41).